Here is a 58-residue protein sequence, read N- to C-terminus: Large ribosomal subunit protein uL30 (58 aa).

This sequence belongs to the universal ribosomal protein uL30 family. Part of the 50S ribosomal subunit.

This Cytophaga hutchinsonii (strain ATCC 33406 / DSM 1761 / CIP 103989 / NBRC 15051 / NCIMB 9469 / D465) protein is Large ribosomal subunit protein uL30.